Consider the following 349-residue polypeptide: Hydroxymethylglutaryl-CoA synthase (349 aa).

Asp-30 and Ala-31 together coordinate (3S)-3-hydroxy-3-methylglutaryl-CoA. Residue Glu-82 is the Proton donor/acceptor of the active site. Positions 114 and 155 each coordinate (3S)-3-hydroxy-3-methylglutaryl-CoA. The active-site Acyl-thioester intermediate is the Cys-114. Arg-203 is a binding site for CoA. The (3S)-3-hydroxy-3-methylglutaryl-CoA site is built by Thr-205 and His-238. The active-site Proton donor/acceptor is the His-238. Lys-243 is a binding site for CoA. The (3S)-3-hydroxy-3-methylglutaryl-CoA site is built by Asn-270 and Ser-300.

Belongs to the thiolase-like superfamily. Archaeal HMG-CoA synthase family. In terms of assembly, interacts with acetoacetyl-CoA thiolase that catalyzes the precedent step in the pathway and with a DUF35 protein. The acetoacetyl-CoA thiolase/HMG-CoA synthase complex channels the intermediate via a fused CoA-binding site, which allows for efficient coupling of the endergonic thiolase reaction with the exergonic HMGCS reaction.

The catalysed reaction is acetoacetyl-CoA + acetyl-CoA + H2O = (3S)-3-hydroxy-3-methylglutaryl-CoA + CoA + H(+). It participates in metabolic intermediate biosynthesis; (R)-mevalonate biosynthesis; (R)-mevalonate from acetyl-CoA: step 2/3. Functionally, catalyzes the condensation of acetyl-CoA with acetoacetyl-CoA to form 3-hydroxy-3-methylglutaryl-CoA (HMG-CoA). Functions in the mevalonate (MVA) pathway leading to isopentenyl diphosphate (IPP), a key precursor for the biosynthesis of isoprenoid compounds that are building blocks of archaeal membrane lipids. This chain is Hydroxymethylglutaryl-CoA synthase, found in Methanococcus maripaludis (strain C5 / ATCC BAA-1333).